Consider the following 421-residue polypeptide: Protein MID1-COMPLEMENTING ACTIVITY 1 (421 aa).

Positions 188–218 (RFCEALKTENEKLQIELQRSQEHYDVAQCEV) form a coiled coil. Positions 233 to 288 (EPDSEKELTKKASKKSERSSSMKTEYSYDEDSPKKSSTRAASRSTSNVSSGHDLLS) are disordered. Over residues 235–252 (DSEKELTKKASKKSERSS) the composition is skewed to basic and acidic residues. Positions 270–282 (TRAASRSTSNVSS) are enriched in low complexity. The chain crosses the membrane as a helical span at residues 346 to 362 (LMAYSLILSCCCYTCCV).

As to expression, expressed in roots, leaves, stems, flowers and siliques. Expressed in vascular tissues of cotyledons, leaves and primary root, in the promeristem and adjacent elongation zone of the primary root and in the shoot apical meristem. Detected in the stele and endodermis, but not in the cortex, epidermis or root cap, including the columella. Not expressed in root hairs or in mesophyll cells of leaves and cotyledons.

The protein localises to the cell membrane. Its activity is regulated as follows. Inhibited by GdCl(3), but not by verapamil. Its function is as follows. Calcium-permeable stretch-activated channel component. Involved in mechano-stimulated calcium uptake mechanism and in mechanosensing in the primary root. The polypeptide is Protein MID1-COMPLEMENTING ACTIVITY 1 (MCA1) (Arabidopsis thaliana (Mouse-ear cress)).